Consider the following 161-residue polypeptide: Probable metalloprotease HVO_1016 (161 aa).

One can recognise an MPN domain in the interval 10–131 (VGIAADALDF…WEAFDQSGEV (122 aa)). Residue glutamate 31 is the Proton donor/acceptor of the active site. Residues histidine 87, histidine 89, and aspartate 100 each coordinate Zn(2+). Residues 87-100 (HSHPNGVLRPSDAD) carry the JAMM motif motif.

It belongs to the peptidase M67B family. In terms of assembly, monomer and homodimer. Zn(2+) serves as cofactor.

In terms of biological role, probable metalloprotease. Does not hydrolyze SAMP1- and SAMP2-protein conjugates, diglycine-AMC, Ub-AMC, hemoglobin, cytochrome c, carbonic anhydrase, creatinine phosphokinase, beta-amylase and bovine serum albumin. The sequence is that of Probable metalloprotease HVO_1016 from Haloferax volcanii (strain ATCC 29605 / DSM 3757 / JCM 8879 / NBRC 14742 / NCIMB 2012 / VKM B-1768 / DS2) (Halobacterium volcanii).